Consider the following 591-residue polypeptide: tRNA 5-methylaminomethyl-2-thiouridine biosynthesis bifunctional protein MnmC (591 aa).

The tract at residues 1–232 is tRNA (mnm(5)s(2)U34)-methyltransferase; the sequence is MTPTAPSPLV…KRERLEAWRP (232 aa). Positions 247–591 are FAD-dependent cmnm(5)s(2)U34 oxidoreductase; sequence IGGGIAGAAL…FDSPVTRSRL (345 aa).

It in the N-terminal section; belongs to the methyltransferase superfamily. tRNA (mnm(5)s(2)U34)-methyltransferase family. This sequence in the C-terminal section; belongs to the DAO family. FAD is required as a cofactor.

The protein localises to the cytoplasm. The catalysed reaction is 5-aminomethyl-2-thiouridine(34) in tRNA + S-adenosyl-L-methionine = 5-methylaminomethyl-2-thiouridine(34) in tRNA + S-adenosyl-L-homocysteine + H(+). Catalyzes the last two steps in the biosynthesis of 5-methylaminomethyl-2-thiouridine (mnm(5)s(2)U) at the wobble position (U34) in tRNA. Catalyzes the FAD-dependent demodification of cmnm(5)s(2)U34 to nm(5)s(2)U34, followed by the transfer of a methyl group from S-adenosyl-L-methionine to nm(5)s(2)U34, to form mnm(5)s(2)U34. The chain is tRNA 5-methylaminomethyl-2-thiouridine biosynthesis bifunctional protein MnmC from Caulobacter vibrioides (strain ATCC 19089 / CIP 103742 / CB 15) (Caulobacter crescentus).